The chain runs to 190 residues: Homeobox protein SEBOX (190 aa).

The span at 1–11 (MPSPVDASSAD) shows a compositional bias: low complexity. 2 disordered regions span residues 1-24 (MPSP…RKRT) and 82-161 (ILSP…VHPS). Positions 19 to 78 (HRRKRTTFSKGQLLELERAFAAWPYPNISTHEHLAWVTCLPEAKVQVWFQKRWAKIIKNR) form a DNA-binding region, homeobox. Polar residues predominate over residues 89–100 (CPQSSCSLPDTL).

The protein belongs to the paired homeobox family.

It is found in the nucleus. Functionally, probable transcription factor involved in the control of specification of mesoderm and endoderm. This Homo sapiens (Human) protein is Homeobox protein SEBOX (SEBOX).